Reading from the N-terminus, the 107-residue chain is Iron-binding protein IscA (107 aa).

Residues Cys-35, Cys-99, and Cys-101 each coordinate Fe cation.

The protein belongs to the HesB/IscA family. As to quaternary structure, homodimer; may form tetramers and higher multimers. Fe cation serves as cofactor.

Its function is as follows. Is able to transfer iron-sulfur clusters to apo-ferredoxin. Multiple cycles of [2Fe2S] cluster formation and transfer are observed, suggesting that IscA acts catalytically. Recruits intracellular free iron so as to provide iron for the assembly of transient iron-sulfur cluster in IscU in the presence of IscS, L-cysteine and the thioredoxin reductase system TrxA/TrxB. This is Iron-binding protein IscA from Salmonella newport (strain SL254).